A 443-amino-acid chain; its full sequence is Transmembrane protein 184C (443 aa).

A run of 7 helical transmembrane segments spans residues 15-35 (LVVL…IWKL), 46-66 (AWFI…WGIL), 84-104 (ILWM…YPDI), 182-202 (PVTT…EGDF), 210-230 (YLVI…VLFY), 252-272 (VVFV…AGVI), and 284-304 (VATG…AVAH). Polar residues predominate over residues 369–378 (TSLLSSSTQD). Residues 369–422 (TSLLSSSTQDPISAASSIPPSPSGHYQGFGQTITPQTTPTATTMPEELYSADSP) form a disordered region. Low complexity predominate over residues 399-411 (QTITPQTTPTATT).

The protein belongs to the TMEM184 family.

The protein resides in the membrane. Functionally, may play a role in cell growth. The polypeptide is Transmembrane protein 184C (tmem184c) (Xenopus tropicalis (Western clawed frog)).